Here is a 179-residue protein sequence, read N- to C-terminus: Large ribosomal subunit protein uL5 (179 aa).

The protein belongs to the universal ribosomal protein uL5 family. In terms of assembly, part of the 50S ribosomal subunit; part of the 5S rRNA/L5/L18/L25 subcomplex. Contacts the 5S rRNA and the P site tRNA. Forms a bridge to the 30S subunit in the 70S ribosome.

This is one of the proteins that bind and probably mediate the attachment of the 5S RNA into the large ribosomal subunit, where it forms part of the central protuberance. In the 70S ribosome it contacts protein S13 of the 30S subunit (bridge B1b), connecting the 2 subunits; this bridge is implicated in subunit movement. Contacts the P site tRNA; the 5S rRNA and some of its associated proteins might help stabilize positioning of ribosome-bound tRNAs. The protein is Large ribosomal subunit protein uL5 of Thioalkalivibrio sulfidiphilus (strain HL-EbGR7).